The primary structure comprises 360 residues: tRNA N6-adenosine threonylcarbamoyltransferase (360 aa).

Residues histidine 115 and histidine 119 each contribute to the Fe cation site. Substrate contacts are provided by residues 137–141 (LVSGG), aspartate 170, glycine 183, and asparagine 283. Aspartate 311 lines the Fe cation pocket.

The protein belongs to the KAE1 / TsaD family. Requires Fe(2+) as cofactor.

The protein localises to the cytoplasm. The enzyme catalyses L-threonylcarbamoyladenylate + adenosine(37) in tRNA = N(6)-L-threonylcarbamoyladenosine(37) in tRNA + AMP + H(+). Required for the formation of a threonylcarbamoyl group on adenosine at position 37 (t(6)A37) in tRNAs that read codons beginning with adenine. Is involved in the transfer of the threonylcarbamoyl moiety of threonylcarbamoyl-AMP (TC-AMP) to the N6 group of A37, together with TsaE and TsaB. TsaD likely plays a direct catalytic role in this reaction. The protein is tRNA N6-adenosine threonylcarbamoyltransferase of Sinorhizobium medicae (strain WSM419) (Ensifer medicae).